The primary structure comprises 379 residues: Chaperone protein DnaJ (379 aa).

The 66-residue stretch at 5-70 folds into the J domain; that stretch reads DYYEILEVSR…EKRAAYDRYG (66 aa). A CR-type zinc finger spans residues 135–213; sequence GIKVPISYVT…CGGSGRVRNE (79 aa). Zn(2+) contacts are provided by C148, C151, C165, C168, C187, C190, C201, and C204. CXXCXGXG motif repeat units lie at residues 148-155, 165-172, 187-194, and 201-208; these read CSSCSGIG, CGNCNGAG, CNVCNGEG, and CRRCGGSG.

Belongs to the DnaJ family. In terms of assembly, homodimer. The cofactor is Zn(2+).

Its subcellular location is the cytoplasm. Its function is as follows. Participates actively in the response to hyperosmotic and heat shock by preventing the aggregation of stress-denatured proteins and by disaggregating proteins, also in an autonomous, DnaK-independent fashion. Unfolded proteins bind initially to DnaJ; upon interaction with the DnaJ-bound protein, DnaK hydrolyzes its bound ATP, resulting in the formation of a stable complex. GrpE releases ADP from DnaK; ATP binding to DnaK triggers the release of the substrate protein, thus completing the reaction cycle. Several rounds of ATP-dependent interactions between DnaJ, DnaK and GrpE are required for fully efficient folding. Also involved, together with DnaK and GrpE, in the DNA replication of plasmids through activation of initiation proteins. The polypeptide is Chaperone protein DnaJ (Anaplasma marginale (strain Florida)).